A 379-amino-acid polypeptide reads, in one-letter code: ORC1-type DNA replication protein 2 (379 aa).

ATP is bound by residues 69–73 (TGKTT), Tyr-211, and Arg-223.

It belongs to the CDC6/cdc18 family. Interacts with MCM. Post-translationally, autophosphorylated on a serine. Phosphorylation is inhibited by binding to MCM. Both single-stranded DNA and double-stranded DNA inhibit the phosphorylation reaction.

In terms of biological role, involved in regulation of DNA replication. Dissociates the MCM complex and inhibits the MCM helicase activity, suggesting that it may function as a helicase loader. Binds to both specific and random double-stranded or single-stranded DNA. The polypeptide is ORC1-type DNA replication protein 2 (cdc6-2) (Methanothermobacter thermautotrophicus (strain ATCC 29096 / DSM 1053 / JCM 10044 / NBRC 100330 / Delta H) (Methanobacterium thermoautotrophicum)).